A 359-amino-acid chain; its full sequence is Protein RecA (359 aa).

64–71 provides a ligand contact to ATP; the sequence is GHESSGKT. Positions 328–359 are disordered; the sequence is NKYPNKDSNDSPKEGSKIKTKVNPAVTQDELI. Residues 331 to 344 show a composition bias toward basic and acidic residues; sequence PNKDSNDSPKEGSK.

It belongs to the RecA family.

Its subcellular location is the cytoplasm. In terms of biological role, can catalyze the hydrolysis of ATP in the presence of single-stranded DNA, the ATP-dependent uptake of single-stranded DNA by duplex DNA, and the ATP-dependent hybridization of homologous single-stranded DNAs. It interacts with LexA causing its activation and leading to its autocatalytic cleavage. In Francisella tularensis subsp. novicida (strain U112), this protein is Protein RecA.